The following is a 950-amino-acid chain: Translation initiation factor IF-2 (950 aa).

Disordered regions lie at residues 69–92 (KTKT…AGKA) and 128–352 (KPKV…SNVP). 5 stretches are compositionally biased toward basic and acidic residues: residues 77–86 (AKSKQEDHPR), 128–158 (KPKV…EAKA), 165–186 (AEVK…EKKK), 200–234 (KRAE…DNRR), and 291–312 (NRRD…DGNR). 2 stretches are compositionally biased toward polar residues: residues 322–336 (NRNQ…NWNQ) and 343–352 (YQNNQSSNVP). A tr-type G domain is found at 448-619 (ERPAVVTIMG…LLVAEVQELK (172 aa)). Residues 457 to 464 (GHVDHGKT) are G1. 457–464 (GHVDHGKT) provides a ligand contact to GTP. Positions 482-486 (GITQH) are G2. Residues 503-506 (DTPG) are G3. GTP contacts are provided by residues 503–507 (DTPGH) and 557–560 (NKID). Residues 557–560 (NKID) form a G4 region. The segment at 595-597 (SAK) is G5.

It belongs to the TRAFAC class translation factor GTPase superfamily. Classic translation factor GTPase family. IF-2 subfamily.

Its subcellular location is the cytoplasm. Its function is as follows. One of the essential components for the initiation of protein synthesis. Protects formylmethionyl-tRNA from spontaneous hydrolysis and promotes its binding to the 30S ribosomal subunits. Also involved in the hydrolysis of GTP during the formation of the 70S ribosomal complex. This chain is Translation initiation factor IF-2, found in Lactococcus lactis subsp. cremoris (strain SK11).